The chain runs to 721 residues: YTH domain-containing protein 1 (721 aa).

A compositionally biased stretch (acidic residues) spans 29–38 (EADIAEELQD). The tract at residues 29 to 239 (EADIAEELQD…GGGTHSHSQK (211 aa)) is disordered. Low complexity predominate over residues 48 to 75 (SESNGGDSSDSEPSISSVSTATSSLAGS). Over residues 135-151 (ASDKVKSKSPDTEDRQP) the composition is skewed to basic and acidic residues. One can recognise a YTH domain in the interval 254–391 (TRFFLIKSNN…KIGGELCRLF (138 aa)). Residues 260–262 (KSN), W276, and W327 contribute to the RNA site. Disordered stretches follow at residues 424-471 (PPRS…RHHH), 580-605 (DGPG…DKAP), and 651-721 (AGGG…DNRR). Gly residues predominate over residues 432 to 443 (GHGGGGRGGGRG). Basic residues predominate over residues 451-471 (PMRHKRSYHGAPHHRPYRHHH). The span at 583-600 (GAPPLPDYPPPQRPPPPG) shows a compositional bias: pro residues. Residues 651–670 (AGGGMGAGGGSGGGMGGPGG) show a composition bias toward gly residues. Residues 699 to 708 (RDSRPFRERG) show a composition bias toward basic and acidic residues.

It localises to the nucleus. In terms of biological role, regulator of alternative splicing that specifically recognizes and binds N6-methyladenosine (m6A)-containing RNAs. Acts by acting as a reader of m6A methylation. Required for sex determination and dosage compensation via Sxl alternative splicing: m6A methylation acts as a key regulator of Sxl pre-mRNA and promotes female-specific alternative splicing of Sxl, which determines female physiognomy. M6A methylation is also required for neuronal functions. This is YTH domain-containing protein 1 from Drosophila melanogaster (Fruit fly).